Consider the following 450-residue polypeptide: UDP-N-acetylmuramoylalanine--D-glutamate ligase (450 aa).

115–121 (GTNGKTT) lines the ATP pocket.

Belongs to the MurCDEF family.

It is found in the cytoplasm. It carries out the reaction UDP-N-acetyl-alpha-D-muramoyl-L-alanine + D-glutamate + ATP = UDP-N-acetyl-alpha-D-muramoyl-L-alanyl-D-glutamate + ADP + phosphate + H(+). It participates in cell wall biogenesis; peptidoglycan biosynthesis. Cell wall formation. Catalyzes the addition of glutamate to the nucleotide precursor UDP-N-acetylmuramoyl-L-alanine (UMA). The sequence is that of UDP-N-acetylmuramoylalanine--D-glutamate ligase from Lachnospira eligens (strain ATCC 27750 / DSM 3376 / VPI C15-48 / C15-B4) (Eubacterium eligens).